The chain runs to 338 residues: NADH-quinone oxidoreductase subunit H (338 aa).

The next 8 membrane-spanning stretches (helical) occupy residues 22 to 42 (VVQAVVILLVVVLVAALMSFI), 96 to 116 (VAMATAVLSFMVIPVSPALGV), 121 to 141 (IGLLFFMAMAGIAVYAVLFGG), 161 to 181 (ISYEVFLGISLMGVVAIAGSF), 193 to 213 (VWFIIPQFLGFLIFVVAGVAV), 249 to 269 (YVNVVLISALIVTLFFGGWLA), 277 to 297 (FVPPVFWFVIKTAFFVMMFVL), and 315 to 335 (WKICLPLALVNLLVTGAVILM).

This sequence belongs to the complex I subunit 1 family. In terms of assembly, NDH-1 is composed of 14 different subunits. Subunits NuoA, H, J, K, L, M, N constitute the membrane sector of the complex.

The protein localises to the cell inner membrane. The enzyme catalyses a quinone + NADH + 5 H(+)(in) = a quinol + NAD(+) + 4 H(+)(out). Functionally, NDH-1 shuttles electrons from NADH, via FMN and iron-sulfur (Fe-S) centers, to quinones in the respiratory chain. The immediate electron acceptor for the enzyme in this species is believed to be ubiquinone. Couples the redox reaction to proton translocation (for every two electrons transferred, four hydrogen ions are translocated across the cytoplasmic membrane), and thus conserves the redox energy in a proton gradient. This subunit may bind ubiquinone. This Acinetobacter baumannii (strain ATCC 17978 / DSM 105126 / CIP 53.77 / LMG 1025 / NCDC KC755 / 5377) protein is NADH-quinone oxidoreductase subunit H.